The sequence spans 160 residues: 2-C-methyl-D-erythritol 2,4-cyclodiphosphate synthase (160 aa).

Residues Asp9 and His11 each coordinate a divalent metal cation. 4-CDP-2-C-methyl-D-erythritol 2-phosphate contacts are provided by residues 9 to 11 (DVH) and 35 to 36 (HS). A divalent metal cation is bound at residue His43. Residues 57–59 (DIG), 62–66 (FPDTD), 101–107 (AQKPKMA), 133–136 (TTTE), Phe140, and Arg143 each bind 4-CDP-2-C-methyl-D-erythritol 2-phosphate.

This sequence belongs to the IspF family. As to quaternary structure, homotrimer. It depends on a divalent metal cation as a cofactor.

The catalysed reaction is 4-CDP-2-C-methyl-D-erythritol 2-phosphate = 2-C-methyl-D-erythritol 2,4-cyclic diphosphate + CMP. It functions in the pathway isoprenoid biosynthesis; isopentenyl diphosphate biosynthesis via DXP pathway; isopentenyl diphosphate from 1-deoxy-D-xylulose 5-phosphate: step 4/6. In terms of biological role, involved in the biosynthesis of isopentenyl diphosphate (IPP) and dimethylallyl diphosphate (DMAPP), two major building blocks of isoprenoid compounds. Catalyzes the conversion of 4-diphosphocytidyl-2-C-methyl-D-erythritol 2-phosphate (CDP-ME2P) to 2-C-methyl-D-erythritol 2,4-cyclodiphosphate (ME-CPP) with a corresponding release of cytidine 5-monophosphate (CMP). The polypeptide is 2-C-methyl-D-erythritol 2,4-cyclodiphosphate synthase (Geobacillus thermodenitrificans (strain NG80-2)).